Reading from the N-terminus, the 387-residue chain is Succinate--CoA ligase [ADP-forming] subunit beta (387 aa).

The ATP-grasp domain occupies 9-244; sequence KQLFASYGLP…VSQEDDRENR (236 aa). Residues K46, 53-55, E99, C102, and E107 contribute to the ATP site; that span reads GRG. Residues N199 and D213 each coordinate Mg(2+). Substrate-binding positions include N264 and 321–323; that span reads GIV.

It belongs to the succinate/malate CoA ligase beta subunit family. In terms of assembly, heterotetramer of two alpha and two beta subunits. It depends on Mg(2+) as a cofactor.

It carries out the reaction succinate + ATP + CoA = succinyl-CoA + ADP + phosphate. It catalyses the reaction GTP + succinate + CoA = succinyl-CoA + GDP + phosphate. It participates in carbohydrate metabolism; tricarboxylic acid cycle; succinate from succinyl-CoA (ligase route): step 1/1. Its function is as follows. Succinyl-CoA synthetase functions in the citric acid cycle (TCA), coupling the hydrolysis of succinyl-CoA to the synthesis of either ATP or GTP and thus represents the only step of substrate-level phosphorylation in the TCA. The beta subunit provides nucleotide specificity of the enzyme and binds the substrate succinate, while the binding sites for coenzyme A and phosphate are found in the alpha subunit. The protein is Succinate--CoA ligase [ADP-forming] subunit beta of Legionella pneumophila (strain Paris).